The chain runs to 143 residues: Mini-ribonuclease 3 (143 aa).

D35 is an active-site residue.

Belongs to the MrnC RNase family. As to quaternary structure, homodimer. It depends on Mg(2+) as a cofactor.

It is found in the cytoplasm. Its function is as follows. Involved in correct processing of both the 5' and 3' ends of 23S rRNA precursor. Processes 30S rRNA precursor transcript even in absence of ribonuclease 3 (Rnc); Rnc processes 30S rRNA into smaller rRNA precursors. The sequence is that of Mini-ribonuclease 3 from Synechocystis sp. (strain ATCC 27184 / PCC 6803 / Kazusa).